Consider the following 495-residue polypeptide: Histidine--tRNA ligase (495 aa).

This sequence belongs to the class-II aminoacyl-tRNA synthetase family. As to quaternary structure, homodimer.

Its subcellular location is the cytoplasm. It catalyses the reaction tRNA(His) + L-histidine + ATP = L-histidyl-tRNA(His) + AMP + diphosphate + H(+). This Bartonella henselae (strain ATCC 49882 / DSM 28221 / CCUG 30454 / Houston 1) (Rochalimaea henselae) protein is Histidine--tRNA ligase.